The primary structure comprises 258 residues: Synapse differentiation-inducing gene protein 1 (258 aa).

The Cytoplasmic segment spans residues 1–181 (MDGIVEQKSV…NFLMMPPRDH (181 aa)). S137 carries the phosphoserine modification. The helical transmembrane segment at 182–202 (LGLSVFSMLCCFWPLGIAAFY) threads the bilayer. The Extracellular segment spans residues 203–228 (LSHETNKAVAKGDFHQASTSSRRALF). The helical intramembrane region spans 229–249 (LAVLSITIGTGIYVGVAVALI). Over 250–258 (AYLSKNNHL) the chain is Extracellular.

This sequence belongs to the CD225/Dispanin family. As to quaternary structure, homodimer. Interacts with GRIA1 and GRIA2. Enriched in the cerebellum and also expressed in the neocortex and modestly in the hippocampus (at protein level). Expressed in hippocampal neurons, both in cell body and neurites, however its presence is enriched at excitatory synapses and also found in postsynaptic cells.

It is found in the cell membrane. It localises to the early endosome membrane. The protein localises to the postsynaptic density membrane. The protein resides in the synapse. Its subcellular location is the cell projection. It is found in the dendrite. It localises to the dendritic spine. Functionally, may regulate AMPA receptor content at nascent synapses, and have a role in postsynaptic development and maturation. This is Synapse differentiation-inducing gene protein 1 (Syndig1) from Rattus norvegicus (Rat).